The sequence spans 14507 residues: Mucin-16 (14507 aa).

The span at 1 to 17 (MLKPSGLPGSSSPTRSL) shows a compositional bias: low complexity. The tract at residues 1–138 (MLKPSGLPGS…PRTRTSSTEG (138 aa)) is disordered. The Extracellular segment spans residues 1–14451 (MLKPSGLPGS…EPLTGNSDLP (14451 aa)). Polar residues-rich tracts occupy residues 35-46 (TGATLSPKTSTG) and 56-138 (PFTS…STEG). A glycan (N-linked (GlcNAc...) asparagine) is linked at N139. 7 disordered regions span residues 160–180 (EKYTVPTETSTTEGDSTETPW), 198–229 (DSTASKENAPVSMTPAETTVTDSHTPGRTNPS), 265–287 (FSSPEPGSAGHSRISTSAPLSSS), 396–554 (LGGT…STSV), 655–674 (VSKTAAGSSPPGGTKPSYTM), 695–719 (SLGLTPLNTRHPFSSPEPDSAGHTK), and 740–888 (TSTF…RTTL). The span at 166–178 (TETSTTEGDSTET) shows a compositional bias: low complexity. Over residues 212–229 (PAETTVTDSHTPGRTNPS) the composition is skewed to polar residues. Low complexity-rich tracts occupy residues 276 to 287 (SRISTSAPLSSS) and 396 to 413 (LGGTSTSALTTTSPSTTL). Composition is skewed to polar residues over residues 414-423 (VSEETNTHHS), 431-441 (GTLNTSMTPLE), and 460-478 (GFTTLDSKIRSPSQVSSSH). N-linked (GlcNAc...) asparagine glycosylation is present at N434. Composition is skewed to low complexity over residues 485 to 497 (TTGSTSGRQSSST) and 508 to 525 (ATTSSTSKASSWTSESTA). Positions 526–543 (QQFSEPQHTQWVETSPSM) are enriched in polar residues. Composition is skewed to polar residues over residues 696 to 706 (LGLTPLNTRHP), 740 to 780 (TSTF…NAAT), 787 to 796 (NATSPLTHPS), and 805 to 821 (SVLTLSTSAETTDSPNI). N787 carries an N-linked (GlcNAc...) asparagine glycan. Residues 823–846 (PTGTLTSESSESPSTLSLPSVSGV) are compositionally biased toward low complexity. Polar residues-rich tracts occupy residues 847 to 860 (KTTFSSSTPSTHLF) and 869 to 888 (TSNPSVSQPETSVSRVRTTL). N-linked (GlcNAc...) asparagine glycosylation is found at N930 and N957. Polar residues-rich tracts occupy residues 949–969 (SQTNRDTFNDSAAPQSTTWPE), 1092–1101 (GSSTPGRTSQ), 1124–1137 (GTSSALTPQMTATH), and 1301–1317 (SGSSPEMTAPGETNTGS). Disordered regions lie at residues 949 to 981 (SQTNRDTFNDSAAPQSTTWPETSPRFKTGLPSA), 1082 to 1101 (VSPSQSMDAAGSSTPGRTSQ), 1121 to 1149 (PRDGTSSALTPQMTATHPPSPDPGSARST), 1301 to 1378 (SGSS…NLTS), 1593 to 1641 (LGTQ…SSSS), and 1704 to 1757 (LSES…SPTT). The segment covering 1318–1328 (TWDPTTYITTT) has biased composition (low complexity). Composition is skewed to polar residues over residues 1334-1347 (SSAQVSTPHSVRTL), 1368-1378 (PKISSSPNLTS), 1596-1613 (QGRSSSEATTFWKPSTDT), 1621-1633 (GPTNIQSTPPMDN), and 1704-1745 (LSES…GSQM). N-linked (GlcNAc...) asparagine glycosylation is present at N1375. An N-linked (GlcNAc...) asparagine glycan is attached at N1633. Residues 1746–1757 (STSIPLTSSPTT) show a composition bias toward low complexity. 3 N-linked (GlcNAc...) asparagine glycosylation sites follow: N1840, N1877, and N1890. Over residues 1846 to 1908 (DLSHGVHTSS…TEKSEVSSSI (63 aa)) the composition is skewed to polar residues. Disordered stretches follow at residues 1846–1930 (DLSH…PGNR), 2010–2033 (VSASPTHENSVSSGSSTSSPYSSA), 2064–2140 (WPST…GASI), and 2153–2177 (RSDVSGLTSESTANPSLGTASSAGT). Composition is skewed to low complexity over residues 2019–2033 (SVSSGSSTSSPYSSA) and 2064–2085 (WPSTSLSEALSSGHSGVSNPSS). Over residues 2111-2132 (HGPQNTAASTLNTDASSVTGLS) the composition is skewed to polar residues. Residues N2345 and N2375 are each glycosylated (N-linked (GlcNAc...) asparagine). Disordered stretches follow at residues 2393-2455 (PTSI…PFTI) and 2566-2591 (SESKAIHSSPQTPTTPTSGANWETSA). Low complexity-rich tracts occupy residues 2417-2429 (TSTTETNTATSPS) and 2566-2583 (SESKAIHSSPQTPTTPTS). N-linked (GlcNAc...) asparagine glycosylation is present at N2737. 10 disordered regions span residues 2789 to 2822 (TTGSQGMASSGGIRSGSTHSTGTKTFSSLPLTMN), 2838 to 2885 (TATQ…TWGI), 2901 to 3006 (DTKS…AMTS), 3019 to 3052 (TGQAARSGSSSSPISLSTEKETSFLSPTASTSRK), 3083 to 3148 (TLNM…ASSI), 3172 to 3235 (SQAA…PETT), 3251 to 3276 (ALGSGSTSISHLPTGTTSPTKSPTEN), 3299 to 3392 (GTPG…KTET), 3415 to 3436 (TSRSVDEAYSSTSSWSDQTSGS), and 3462 to 3491 (VSLPSGDQGITSLTNPSGGKTSSASSVTSP). The span at 2803–2819 (SGSTHSTGTKTFSSLPL) shows a compositional bias: polar residues. Positions 2864-2875 (SASSSPSKAFAS) are enriched in low complexity. Composition is skewed to polar residues over residues 2876-2885 (LTTAPPTWGI) and 2901-2918 (DTKSASLPTPGQSLNTIP). Residues 2919–2931 (DSDASTASSSLSK) show a composition bias toward low complexity. Positions 2942–2968 (MTSTKAISASSFQSTGFTETPEGSASP) are enriched in polar residues. Residues 3019–3035 (TGQAARSGSSSSPISLS) show a composition bias toward low complexity. Positions 3041 to 3052 (SFLSPTASTSRK) are enriched in polar residues. N-linked (GlcNAc...) asparagine glycosylation is present at N3085. Low complexity predominate over residues 3107–3116 (TAETQTLTFT). 2 stretches are compositionally biased toward polar residues: residues 3117–3132 (PSETPTSLLPVSSPTE) and 3172–3181 (SQAAQGNSTW). N-linked (GlcNAc...) asparagine glycosylation occurs at N3178. Residues 3188-3200 (TGSSPAGTSPGSP) are compositionally biased toward low complexity. Composition is skewed to polar residues over residues 3201–3214 (EMSTTLKIMSSKEP) and 3251–3261 (ALGSGSTSISH). Positions 3263-3274 (PTGTTSPTKSPT) are enriched in low complexity. Polar residues-rich tracts occupy residues 3299 to 3342 (GTPG…TTGM) and 3360 to 3383 (VSLSTSSNILEDPVTSPNSVSSLT). Low complexity-rich tracts occupy residues 3424 to 3436 (SSTSSWSDQTSGS) and 3477 to 3491 (PSGGKTSSASSVTSP). N3501 carries N-linked (GlcNAc...) asparagine glycosylation. A compositionally biased stretch (low complexity) spans 3538–3555 (ISTTITTMGTNSISTTTP). Disordered regions lie at residues 3538–3588 (ISTT…STAA), 3644–3672 (TPSSDASAVKTETSTSERTLSPSDTTAST), 3794–3829 (RSSGVTFSRPDPTSKKAEQTSTQLPTTTSAHPGQVP), 3843–3879 (AKTPDATFQRQGQTALTTEARATSDSWNEKEKSTPSA), 3914–3982 (LESG…SPVV), 4024–4056 (MDTSSTTQTSIISSPGSTAITKGPRTEITSSKR), 4094–4121 (AMQTSPPGATSLSAPTLDTSATASWTGT), and 4138–4166 (FSKGPEDTSQPSPPSVEETSSSSSLVPIH). Composition is skewed to polar residues over residues 3812–3824 (QTSTQLPTTTSAH) and 3848–3868 (ATFQRQGQTALTTEARATSDS). Positions 3916 to 3927 (SGTTSSPSWKSS) are enriched in low complexity. Residues 3946 to 3982 (PSTNTVETTGWVTSSEHASHSTIPAHSASSKLTSPVV) are compositionally biased toward polar residues. The segment covering 4026-4041 (TSSTTQTSIISSPGST) has biased composition (low complexity). The segment covering 4095-4121 (MQTSPPGATSLSAPTLDTSATASWTGT) has biased composition (polar residues). Low complexity predominate over residues 4152-4164 (SVEETSSSSSLVP). 5 N-linked (GlcNAc...) asparagine glycosylation sites follow: N4220, N4498, N4606, N4613, and N4624. Disordered stretches follow at residues 4728–4748 (VKDVSQTNPPFQDEASSPSSQ), 4845–4961 (HSTV…TRLS), and 5026–5066 (VSWT…KLSS). Residues 4856 to 4876 (KVTSPNVTTSTMEDTTISRSI) are compositionally biased toward polar residues. N4861 carries N-linked (GlcNAc...) asparagine glycosylation. Low complexity-rich tracts occupy residues 4877-4914 (PKSSKTTRTETETTSSLTPKLRETSISQEITSSTETST) and 4924-4939 (TTEVSRTDVTSSSSTS). Polar residues-rich tracts occupy residues 4944 to 4961 (DQSTVSLDISTETNTRLS) and 5026 to 5037 (VSWTSPPSVDKT). Low complexity predominate over residues 5038 to 5047 (SSPSSFLSSP). Residues 5048–5059 (AMTTPSLISSTL) are compositionally biased toward polar residues. N5096, N5131, and N5228 each carry an N-linked (GlcNAc...) asparagine glycan. Disordered regions lie at residues 5128–5149 (VKANNSGHESHSPALADSETPK), 5221–5249 (EVSSTGVNSSSKISTPDHDKSTVPPDTFT), and 5271–5303 (TQASPPESASHSTLPLDTSTTLSQGGTHSTVTQ). Residues 5221–5234 (EVSSTGVNSSSKIS) show a composition bias toward polar residues. The span at 5280–5293 (SHSTLPLDTSTTLS) shows a compositional bias: low complexity. Residues 5294–5303 (QGGTHSTVTQ) show a composition bias toward polar residues. A glycan (N-linked (GlcNAc...) asparagine) is linked at N5320. Disordered stretches follow at residues 5328 to 5365 (PVEETSSVSSLMSSPAMTSPSPVSSTSPQSIPSSPLPV), 5381 to 5400 (GTTSPESVTSSPPNLSSITH), 5426 to 5507 (NVGT…TNTA), 5519 to 5538 (ASRTEISSSRTSISDLDRPT), 5624 to 5654 (PVEETSSGFSLMSPSMTSPSPVSSTSPESIP), 5675 to 5696 (LGTTSPEPVTSSPPNLSSPTQE), and 5727 to 5747 (ISGHESQSSVPADSHTSKATS). Low complexity-rich tracts occupy residues 5333 to 5365 (SSVSSLMSSPAMTSPSPVSSTSPQSIPSSPLPV) and 5381 to 5393 (GTTSPESVTSSPP). N5394 carries N-linked (GlcNAc...) asparagine glycosylation. Composition is skewed to polar residues over residues 5426 to 5441 (NVGTSGSGHKSQSSVL) and 5447 to 5485 (SKATPLMSTTSTLGDTSVSTSTPNISQTNQIQTEPTASL). An N-linked (GlcNAc...) asparagine glycan is attached at N5470. Low complexity-rich tracts occupy residues 5495 to 5504 (SEKTSSTTET), 5520 to 5532 (SRTEISSSRTSIS), 5633 to 5654 (SLMSPSMTSPSPVSSTSPESIP), and 5675 to 5688 (LGTTSPEPVTSSPP). N5689 is a glycosylation site (N-linked (GlcNAc...) asparagine). The span at 5727–5737 (ISGHESQSSVP) shows a compositional bias: polar residues. N5863 carries N-linked (GlcNAc...) asparagine glycosylation. Disordered stretches follow at residues 5882–5931 (STAS…SSPV) and 6054–6078 (STSTPGSPETKNVDRDSTSPLTPEL). Residues 5903–5916 (TTTMSRSTKGVSWQ) are compositionally biased toward polar residues. Positions 5917 to 5928 (SPPSVEETSSPS) are enriched in low complexity. The span at 6054–6063 (STSTPGSPET) shows a compositional bias: polar residues. N6088 carries N-linked (GlcNAc...) asparagine glycosylation. Disordered regions lie at residues 6122–6149 (PASAQSTKSPDISPEASSSHSNSPPLTI), 6219–6251 (NSLSSQAPLLVTTSPSPVTSTLQEHSTSSLVSV), 6399–6425 (SRTELTSSSRTSIQGTEKPTMSPDTST), 6438–6459 (TKSEERTIATQTGPHRATSQGT), 6497–6545 (ISGT…TSLP), and 6682–6714 (TTGATETSRTEVASSRRTSIPGPDHSTESPDIS). Composition is skewed to low complexity over residues 6134–6149 (SPEASSSHSNSPPLTI), 6226–6251 (PLLVTTSPSPVTSTLQEHSTSSLVSV), and 6399–6410 (SRTELTSSSRTS). 2 stretches are compositionally biased toward polar residues: residues 6411 to 6425 (IQGTEKPTMSPDTST) and 6445 to 6459 (IATQTGPHRATSQGT). Residues 6500–6523 (TSPPSVEKTSSSSSLLSLPAITSP) are compositionally biased toward low complexity. 2 stretches are compositionally biased toward polar residues: residues 6530 to 6545 (LPESRPSSPVHLTSLP) and 6683 to 6699 (TGATETSRTEVASSRRT). The N-linked (GlcNAc...) asparagine glycan is linked to N6732. Disordered stretches follow at residues 6800 to 6822 (SFSSSLMPSPAMTSPPVSSTLPK), 6845 to 6865 (TLGTSPEPTTSSPPNLSSTSH), and 6886 to 6939 (TAAT…SETT). Over residues 6848-6864 (TSPEPTTSSPPNLSSTS) the composition is skewed to low complexity. N-linked (GlcNAc...) asparagine glycosylation occurs at N6859. Positions 6886 to 6905 (TAATNVETTSSGHGSQSSVL) are enriched in polar residues. A compositionally biased stretch (low complexity) spans 6919–6938 (TTSTMGHTTVSTSMSVSSET). N-linked (GlcNAc...) asparagine glycosylation is present at N6961. Disordered stretches follow at residues 6981 to 7004 (AEVSRTEVTSSGRTSIPGPSQSTV), 7028 to 7107 (MTIP…ATTS), 7143 to 7208 (TSPE…TSKA), 7279 to 7302 (SRTEVTSSSRTSISGSAESTMLPE), 7320 to 7345 (ESSEMTIKTQTSPPGSTSESTFTLDT), 7360 to 7427 (QRLP…SLLT), 7437 to 7456 (LDASAEPETSSPPSLSSTSV), 7463 to 7503 (EVTT…ETTK), 7527 to 7553 (SNTRKIQSEPASSLTTRLRETSTSEET), 7577 to 7597 (TEAISFSRTSMSGPEQSTMSQ), 7726 to 7782 (ATTT…TTSS), 7825 to 7849 (LASSLTPGLRESSGSEGTSSGTKMS), 7908 to 7927 (HTSPLGATTQGTSTLDTSST), and 7970 to 8000 (PSFSLMSSPATTSPSPVSSTLPESISSSPLP). A compositionally biased stretch (polar residues) spans 7028–7038 (MTIPTQTGPSG). Over residues 7039 to 7055 (STSQDTLTLDTSTTKSQ) the composition is skewed to low complexity. Over residues 7057-7075 (KTHSTLTQRFPHSEMTTLM) the composition is skewed to polar residues. The span at 7086–7105 (SSPSLENPSSLPSLLSLPAT) shows a compositional bias: low complexity. Positions 7166–7200 (GKDTTNTEAVHPSTNTAASNVEIPSSGHESPSSAL) are enriched in polar residues. The segment covering 7279-7298 (SRTEVTSSSRTSISGSAEST) has biased composition (low complexity). Composition is skewed to polar residues over residues 7322-7345 (SEMTIKTQTSPPGSTSESTFTLDT), 7360-7371 (QRLPHSEITTLV), and 7390-7402 (SPPSSQLSLSAMI). Low complexity-rich tracts occupy residues 7403-7427 (SPSPVSSTLPASSHSSSASVTSLLT) and 7439-7455 (ASAEPETSSPPSLSSTS). Over residues 7474–7484 (FSNTAVTKVGT) the composition is skewed to polar residues. Positions 7485 to 7494 (SSSGHESPSS) are enriched in low complexity. Residues 7733-7749 (GTSTEPGTSSSSSLSTT) show a composition bias toward low complexity. The span at 7750 to 7765 (SHERLTTYKDTAHTEA) shows a compositional bias: basic and acidic residues. The segment covering 7768–7782 (PSTNTGGTNVATTSS) has biased composition (polar residues). Low complexity-rich tracts occupy residues 7835-7846 (ESSGSEGTSSGT), 7915-7927 (TTQGTSTLDTSST), and 7973-8000 (SLMSSPATTSPSPVSSTLPESISSSPLP). Residues N8029 and N8055 are each glycosylated (N-linked (GlcNAc...) asparagine). 8 disordered regions span residues 8042–8078 (EVTTDTEKTHPSSNRTVTDVGTSSSGHESTSFVLADS), 8111–8134 (IQTEPTSSLTLGLRKTSSSEGTSL), 8312–8331 (GISREPGTSSTSNLSSTSHE), 8342–8389 (TEDM…YTMG), 8411–8472 (TSSL…ISPD), 8604–8624 (MLRTSSEPETSSPPNLSSTSA), 8674–8741 (SPMA…TKVS), and 8775–8880 (TPLT…HSSP). Residues 8052-8078 (PSSNRTVTDVGTSSSGHESTSFVLADS) are compositionally biased toward polar residues. Residues 8319 to 8328 (TSSTSNLSST) are compositionally biased toward low complexity. Residue N8324 is glycosylated (N-linked (GlcNAc...) asparagine). Residues 8345–8389 (MQPSTHTAVTNVRTSISGHESQSSVLSDSETPKATSPMGTTYTMG) are compositionally biased toward polar residues. A compositionally biased stretch (low complexity) spans 8607 to 8624 (TSSEPETSSPPNLSSTSA). N-linked (GlcNAc...) asparagine glycosylation is found at N8618 and N8684. Polar residues-rich tracts occupy residues 8674-8740 (SPMA…TTKV) and 8781-8810 (GSAEMTITPKTGHSGASSQGTFTLDTSSRA). The span at 8850 to 8880 (TSPPSSLVSLSAVTSPSPLYSTPSESSHSSP) shows a compositional bias: low complexity. N8913 carries an N-linked (GlcNAc...) asparagine glycan. 2 disordered regions span residues 8995 to 9018 (ESTSTLTPTPRETSTSQEIHSATK) and 9147 to 9168 (SLSSPVMTSSSPVSSTLPDSIH). N-linked (GlcNAc...) asparagine glycosylation is present at N9202. Over residues 9294–9307 (SISEETSSATEKST) the composition is skewed to low complexity. Residues 9294-9460 (SISEETSSAT…TPSGSSHSSP (167 aa)) form a disordered region. Composition is skewed to polar residues over residues 9308-9357 (VLSS…STPL) and 9374-9412 (SGATSQGTFTLDSSSTASWPGTHSATTQRFPQSVVTTPM). The segment covering 9431-9460 (SPPSSLVSSSSVTSPSPLYSTPSGSSHSSP) has biased composition (low complexity). The N-linked (GlcNAc...) asparagine glycan is linked to N9493. 4 disordered regions span residues 9611 to 9635 (ATPEVSRTEVMPSSRTSIPGPAQST), 9726 to 9753 (SSSSLTSLPLTTSLSPVSSTLLDSSPSS), 9771 to 9791 (VLDTSSEPKTSSSPNLSSTSV), and 9869 to 9890 (TEPTFSLTPGFRETSTSEETTS). Residues 9621–9635 (MPSSRTSIPGPAQST) are compositionally biased toward polar residues. 2 stretches are compositionally biased toward low complexity: residues 9774 to 9790 (TSSEPKTSSSPNLSSTS) and 9881 to 9890 (ETSTSEETTS). The N-linked (GlcNAc...) asparagine glycan is linked to N9785. 2 N-linked (GlcNAc...) asparagine glycosylation sites follow: N10075 and N10173. 2 disordered regions span residues 10175 to 10218 (SLDT…PPAS) and 10445 to 10469 (TIRPVKGPQTSTSPASPKGLHTGGT). Low complexity predominate over residues 10178–10193 (TSSVTPTNTPSSPGST). Over residues 10194 to 10212 (HLLQSSKTDFTSSAKTSSP) the composition is skewed to polar residues. N-linked (GlcNAc...) asparagine glycosylation is present at N10510. Polar residues predominate over residues 10544 to 10573 (SLGAETSTALPRTTPSVFNRESETTASLVS). Disordered stretches follow at residues 10544 to 10590 (SLGA…DVSS) and 10689 to 10719 (ETSSTIPRTIPNFSHHESDATPSIATSPGAE). Residue N10700 is glycosylated (N-linked (GlcNAc...) asparagine). Residues 10708–10719 (ATPSIATSPGAE) show a composition bias toward polar residues. Residue N10749 is glycosylated (N-linked (GlcNAc...) asparagine). Positions 10849–10860 (TTPSMTTSHGAE) are enriched in polar residues. Disordered regions lie at residues 10849-10872 (TTPSMTTSHGAESSSAVPTPTVST), 10898-10926 (LSPGEPETTPSMATSHGEEASSAIPTPTV), and 11003-11036 (LPTLTLSPGEPETTPSMATSHGAEASSTVPTVSP). Residues 10861-10872 (SSSAVPTPTVST) show a composition bias toward low complexity. Positions 11003–11018 (LPTLTLSPGEPETTPS) are enriched in low complexity. N11053 carries N-linked (GlcNAc...) asparagine glycosylation. Residues 11072-11092 (SMATSHGAEASSAVPTPTVSP) form a disordered region. N-linked (GlcNAc...) asparagine glycosylation is found at N11224 and N11263. 2 stretches are compositionally biased toward polar residues: residues 11269–11284 (HPAESSSTLPRTTSRF) and 11358–11381 (STTVPRTTPNYSHSEPDTTPSIAT). Disordered regions lie at residues 11269–11301 (HPAESSSTLPRTTSRFSHSELDTMPSTVTSPEA), 11358–11400 (STTV…SPDV), 11508–11537 (KFSHSKSDTTLPVAITSPGPEASSAVSTTT), 11583–11724 (ETST…TSPR), 11836–11861 (SPTASPGVSAKTAPLSTHPGTETSTM), and 11913–11937 (QTVTSWNTETSPSVTSVGPPEFSRT). N-linked (GlcNAc...) asparagine glycosylation is present at N11367. Composition is skewed to polar residues over residues 11583 to 11594 (ETSTTVSGTIPN), 11631 to 11651 (VTSQVTSSATDTSTAIPTLTP), and 11658 to 11672 (TTASSATHPGTQTGF). N-linked (GlcNAc...) asparagine glycosylation is present at N11594. A compositionally biased stretch (low complexity) spans 11700–11717 (PVSRTTSSFSHSSPDATP). 2 stretches are compositionally biased toward polar residues: residues 11849 to 11861 (PLSTHPGTETSTM) and 11913 to 11928 (QTVTSWNTETSPSVTS). 12 tandem repeats follow at residues 12067–12223 (AATV…PSPT), 12224–12381 (TAGP…PTIM), 12382–12537 (AAGP…PSPA), 12538–12692 (TAGP…PSPT), 12693–12848 (TAGP…PSPT), 12849–13004 (SAGP…PSPT), 13005–13160 (TAVP…PSPT), 13161–13316 (TTGP…PGPT), 13317–13472 (ATGP…SGPM), 13473–13628 (TASP…PGPS), 13629–13784 (AASP…FGPS), and 13785–13939 (AASH…RYMA). Residues 12067–13939 (AATVPFMVPF…FTINNLRYMA (1873 aa)) form a 12 X approximate tandem repeats region. Positions 12072–12193 (FMVPFTLNFT…NSLYVNGFTH (122 aa)) constitute an SEA 1 domain. 3 N-linked (GlcNAc...) asparagine glycosylation sites follow: N12079, N12100, and N12116. C12126 and C12146 are oxidised to a cystine. N12168 is a glycosylation site (N-linked (GlcNAc...) asparagine). Positions 12196–12226 (SMPTTSTPGTSTVDVGTSGTPSSSPSPTTAG) are disordered. Residues 12228 to 12349 (LLMPFTLNFT…NSLYVNGFTH (122 aa)) form the SEA 2 domain. N-linked (GlcNAc...) asparagine glycans are attached at residues N12235 and N12272. C12282 and C12302 are joined by a disulfide. The disordered stretch occupies residues 12353–12376 (VSTTSTPGTSTVDLRTSGTPSSLS). 3 SEA domains span residues 12386–12507 (LLVP…GFTH), 12542–12663 (LLVL…GFTH), and 12697–12818 (LLVP…GFTH). N12393, N12414, and N12430 each carry an N-linked (GlcNAc...) asparagine glycan. C12440 and C12460 are joined by a disulfide. N-linked (GlcNAc...) asparagine glycans are attached at residues N12549, N12570, and N12586. C12596 and C12616 are oxidised to a cystine. N-linked (GlcNAc...) asparagine glycosylation is found at N12704, N12725, and N12741. Cysteines 12751 and 12771 form a disulfide. Over residues 12819–12834 (QTSAPNTSTPGTSTVD) the composition is skewed to polar residues. The disordered stretch occupies residues 12819-12849 (QTSAPNTSTPGTSTVDLGTSGTPSSLPSPTS). A glycan (N-linked (GlcNAc...) asparagine) is linked at N12824. A compositionally biased stretch (low complexity) spans 12835-12849 (LGTSGTPSSLPSPTS). The 122-residue stretch at 12853-12974 (LLVPFTLNFT…NSLYVNGFTH (122 aa)) folds into the SEA 6 domain. Residues N12860, N12881, and N12897 are each glycosylated (N-linked (GlcNAc...) asparagine). A disulfide bond links C12907 and C12927. The segment covering 12978-12990 (VAPTSTPGTSTVD) has biased composition (polar residues). Residues 12978-13003 (VAPTSTPGTSTVDLGTSGTPSSLPSP) form a disordered region. Residues 12991–13003 (LGTSGTPSSLPSP) are compositionally biased toward low complexity. 2 SEA domains span residues 13009–13130 (LLVP…GFTH) and 13165–13286 (LLVP…GFTQ). N13016, N13037, and N13053 each carry an N-linked (GlcNAc...) asparagine glycan. A disulfide bridge connects residues C13063 and C13083. N13172 and N13193 each carry an N-linked (GlcNAc...) asparagine glycan. C13219 and C13239 form a disulfide bridge. Polar residues predominate over residues 13291–13313 (PTTSTPGTFTVQPETSETPSSLP). The disordered stretch occupies residues 13291 to 13317 (PTTSTPGTFTVQPETSETPSSLPGPTA). 2 SEA domains span residues 13321 to 13442 (VLLP…GFTH) and 13477 to 13598 (LLVL…GFTQ). Residues N13328, N13349, and N13365 are each glycosylated (N-linked (GlcNAc...) asparagine). An intrachain disulfide couples C13375 to C13395. N13484, N13505, and N13521 each carry an N-linked (GlcNAc...) asparagine glycan. Cysteines 13531 and 13551 form a disulfide. Positions 13603–13621 (PTTSIPGTPTVDLGTSGTP) are enriched in polar residues. Positions 13603-13625 (PTTSIPGTPTVDLGTSGTPVSKP) are disordered. 4 SEA domains span residues 13633 to 13754 (LLVL…GFTH), 13789 to 13909 (LLIL…GFTH), 13922 to 14043 (SEEP…GYNE), and 14073 to 14193 (HLKT…GYAP). 2 N-linked (GlcNAc...) asparagine glycosylation sites follow: N13640 and N13661. C13687 and C13707 are joined by a disulfide. N-linked (GlcNAc...) asparagine glycans are attached at residues N13733, N13744, N13796, N13816, N13832, N13929, and N13950. Cysteines 13976 and 13996 form a disulfide. N-linked (GlcNAc...) asparagine glycosylation is found at N14080 and N14100. C14126 and C14146 form a disulfide bridge. N14195, N14212, N14254, N14287, N14326, and N14363 each carry an N-linked (GlcNAc...) asparagine glycan. SEA domains lie at 14198-14309 (IRGE…EMES) and 14319-14438 (STQH…GYSP). Residues C14373 and C14393 are joined by a disulfide bond. Residues N14417 and N14423 are each glycosylated (N-linked (GlcNAc...) asparagine). Residues 14452 to 14472 (FWAVILIGLAGLLGVITCLIC) traverse the membrane as a helical segment. Residues 14473 to 14507 (GVLVTTRRRKKEGEYNVQQQCPGYYQSHLDLEDLQ) lie on the Cytoplasmic side of the membrane.

Binds to MSLN. Binding to MSLN mediates heterotypic cell adhesion. This may contribute to the metastasis of ovarian cancer to the peritoneum by initiating cell attachment to the mesothelial epithelium via binding to MSLN. Post-translationally, heavily O-glycosylated; expresses both type 1 and type 2 core glycans. In terms of processing, heavily N-glycosylated; expresses primarily high mannose and complex bisecting type N-linked glycans. May be phosphorylated. Phosphorylation of the intracellular C-terminal domain may induce proteolytic cleavage and the liberation of the extracellular domain into the extracellular space. Post-translationally, may contain numerous disulfide bridges. Association of several molecules of the secreted form may occur through interchain disulfide bridges providing an extraordinarily large gel-like matrix in the extracellular space or in the lumen of secretory ducts. Expressed in corneal and conjunctival epithelia (at protein level). Overexpressed in ovarian carcinomas and ovarian low malignant potential (LMP) tumors as compared to the expression in normal ovarian tissue and ovarian adenomas.

It is found in the cell membrane. It localises to the secreted. The protein localises to the extracellular space. In terms of biological role, thought to provide a protective, lubricating barrier against particles and infectious agents at mucosal surfaces. This Homo sapiens (Human) protein is Mucin-16.